We begin with the raw amino-acid sequence, 194 residues long: dCTP deaminase, dUMP-forming (194 aa).

DCTP contacts are provided by residues 104–109 (RSSLGR), Asp-122, 130–132 (TLE), Gln-151, Tyr-165, Lys-172, and Gln-176. The active-site Proton donor/acceptor is Glu-132.

This sequence belongs to the dCTP deaminase family. Homotrimer.

The catalysed reaction is dCTP + 2 H2O = dUMP + NH4(+) + diphosphate. It participates in pyrimidine metabolism; dUMP biosynthesis; dUMP from dCTP: step 1/1. Functionally, bifunctional enzyme that catalyzes both the deamination of dCTP to dUTP and the hydrolysis of dUTP to dUMP without releasing the toxic dUTP intermediate. The sequence is that of dCTP deaminase, dUMP-forming from Dictyoglomus turgidum (strain DSM 6724 / Z-1310).